The sequence spans 488 residues: Glutamyl-tRNA(Gln) amidotransferase subunit A (488 aa).

Active-site charge relay system residues include K77 and S152. S176 functions as the Acyl-ester intermediate in the catalytic mechanism.

It belongs to the amidase family. GatA subfamily. As to quaternary structure, heterotrimer of A, B and C subunits.

It catalyses the reaction L-glutamyl-tRNA(Gln) + L-glutamine + ATP + H2O = L-glutaminyl-tRNA(Gln) + L-glutamate + ADP + phosphate + H(+). Allows the formation of correctly charged Gln-tRNA(Gln) through the transamidation of misacylated Glu-tRNA(Gln) in organisms which lack glutaminyl-tRNA synthetase. The reaction takes place in the presence of glutamine and ATP through an activated gamma-phospho-Glu-tRNA(Gln). The sequence is that of Glutamyl-tRNA(Gln) amidotransferase subunit A from Streptococcus pneumoniae (strain Hungary19A-6).